The chain runs to 381 residues: MAASSSELEVITAKKPNVKGPRRVANQIPEEILKDSDLNEAIKALPANYNFEIHKTIWRVRQAKAKRVALQLPEGLQMFACVIADIIERFTEADTLVMGDVTYGACCVDDFTARALGADFMVHYGHSCLIPIDSTEGIKMLYVFVDIQIDTAHFLDTLRFNFPPGRSLALVSTIQFVAALQAASAALKPDYEVLVPQCRPLSPGEILGCTSPRLDKHVNAVIYLGDGRFHLESIMIANPDTPAYRYDPYSKVFSREYYDHDAMRATRLKAIESACSAQRWGLILGTLGRQGNPKILEHLESQLKSLGRSFTRVLLSEIFPRKLELLADVDAQQWRYSRLDGRMCIPWISIPIRVWGPGLLIIRITNLNGLHAKPHRRLVSR.

[4Fe-4S] cluster contacts are provided by Cys106, Cys209, and Cys344.

It belongs to the DPH1/DPH2 family. DPH1 subfamily. Component of the 2-(3-amino-3-carboxypropyl)histidine synthase complex composed of dph1, dph2, dph3 and a NADH-dependent reductase. The cofactor is [4Fe-4S] cluster.

Its subcellular location is the nucleus. The protein resides in the cytoplasm. The catalysed reaction is L-histidyl-[translation elongation factor 2] + S-adenosyl-L-methionine = 2-[(3S)-amino-3-carboxypropyl]-L-histidyl-[translation elongation factor 2] + S-methyl-5'-thioadenosine + H(+). The protein operates within protein modification; peptidyl-diphthamide biosynthesis. In terms of biological role, catalyzes the first step of diphthamide biosynthesis, a post-translational modification of histidine which occurs in elongation factor 2. Dph1 and dph2 transfer a 3-amino-3-carboxypropyl (ACP) group from S-adenosyl-L-methionine (SAM) to a histidine residue, the reaction is assisted by a reduction system comprising dph3 and a NADH-dependent reductase. The protein is 2-(3-amino-3-carboxypropyl)histidine synthase subunit 1 (dph1) of Danio rerio (Zebrafish).